The chain runs to 185 residues: Elongation factor P (185 aa).

The protein belongs to the elongation factor P family.

It is found in the cytoplasm. It participates in protein biosynthesis; polypeptide chain elongation. Involved in peptide bond synthesis. Stimulates efficient translation and peptide-bond synthesis on native or reconstituted 70S ribosomes in vitro. Probably functions indirectly by altering the affinity of the ribosome for aminoacyl-tRNA, thus increasing their reactivity as acceptors for peptidyl transferase. The sequence is that of Elongation factor P from Geobacillus kaustophilus (strain HTA426).